Consider the following 163-residue polypeptide: UPF0262 protein RPA4530 (163 aa).

Belongs to the UPF0262 family.

This chain is UPF0262 protein RPA4530, found in Rhodopseudomonas palustris (strain ATCC BAA-98 / CGA009).